Consider the following 411-residue polypeptide: Putative nickel insertion protein (411 aa).

Belongs to the LarC family.

In Methanothermobacter thermautotrophicus (strain ATCC 29096 / DSM 1053 / JCM 10044 / NBRC 100330 / Delta H) (Methanobacterium thermoautotrophicum), this protein is Putative nickel insertion protein.